Reading from the N-terminus, the 424-residue chain is Translation initiation factor 2 subunit gamma (424 aa).

One can recognise a tr-type G domain in the interval 23 to 220 (LPEVNIGLVG…AIEETIPTPE (198 aa)). Residues 32–39 (GHVDHGKT) form a G1 region. Residues aspartate 35, threonine 39, glycine 60, and serine 62 each coordinate Mg(2+). A GTP-binding site is contributed by 35–40 (DHGKTT). Residues 60–64 (GISIK) form a G2 region. Residues 107–110 (DSPG) are G3. Residues 163 to 166 (NKID) and 198 to 200 (SAQ) each bind GTP. The G4 stretch occupies residues 163–166 (NKID). The tract at residues 198–200 (SAQ) is G5.

This sequence belongs to the TRAFAC class translation factor GTPase superfamily. Classic translation factor GTPase family. EIF2G subfamily. As to quaternary structure, heterotrimer composed of an alpha, a beta and a gamma chain. It depends on Mg(2+) as a cofactor.

It catalyses the reaction GTP + H2O = GDP + phosphate + H(+). EIF-2 functions in the early steps of protein synthesis by forming a ternary complex with GTP and initiator tRNA. The sequence is that of Translation initiation factor 2 subunit gamma from Archaeoglobus fulgidus (strain ATCC 49558 / DSM 4304 / JCM 9628 / NBRC 100126 / VC-16).